We begin with the raw amino-acid sequence, 215 residues long: Histone-like protein 18C (215 aa).

Positions 140–215 (CTPRKENKCS…PKSSKPKCSM (76 aa)) are disordered. Basic residues-rich tracts occupy residues 149 to 190 (SKPR…RPRK) and 197 to 215 (AKAK…KCSM).

Functionally, not known. Encoded in the intron of cAMP-dependent protein kinase regulatory chain type I. The protein is Histone-like protein 18C (Mst77F) of Drosophila melanogaster (Fruit fly).